The chain runs to 62 residues: Large ribosomal subunit protein bL28 (62 aa).

The tract at residues 1–22 (MAKKCAISGKGPMSGNNVSHAK) is disordered.

It belongs to the bacterial ribosomal protein bL28 family.

In Sulfurimonas denitrificans (strain ATCC 33889 / DSM 1251) (Thiomicrospira denitrificans (strain ATCC 33889 / DSM 1251)), this protein is Large ribosomal subunit protein bL28.